The primary structure comprises 336 residues: Galactose/methyl galactoside import permease protein MglC (336 aa).

8 helical membrane-spanning segments follow: residues 17 to 37 (AIYFVLLILLGIIIAQDPTFL), 53 to 73 (LIIALGVAGLLITQGTDLSAG), 107 to 127 (VVILAVCAIGAVIGLVNGLVI), 128 to 148 (AYLNVTPFIATMGTMIIIYGF), 181 to 201 (FKLSYITIYAAIAALLVWIMW), 231 to 251 (LVAIYMIAGMFYAFGGMLEAG), 257 to 277 (TNNLGFMYELDAIAACVVGGV), and 306 to 326 (IGVNPYWQYIIKGSIIILAVA).

Belongs to the binding-protein-dependent transport system permease family. AraH/RbsC subfamily. In terms of assembly, the complex is composed of one ATP-binding protein (MglA), two transmembrane proteins (MglC) and a solute-binding protein (MglB).

The protein localises to the cell inner membrane. Its function is as follows. Part of the ABC transporter complex MglABC involved in galactose/methyl galactoside import. Probably responsible for the translocation of the substrate across the membrane. This chain is Galactose/methyl galactoside import permease protein MglC (mglC), found in Haemophilus influenzae (strain ATCC 51907 / DSM 11121 / KW20 / Rd).